The sequence spans 517 residues: 2,4,6-trichlorophenol monooxygenase (517 aa).

This sequence belongs to the FADH(2)-utilizing monooxygenase family. As to quaternary structure, homotetramer in solution.

It catalyses the reaction 2,4,6-trichlorophenol + FADH2 + O2 = 2-chloro-6-hydroxy-1,4-benzoquinone + FAD + 2 chloride + 3 H(+). The enzyme catalyses 2,4,6-trichlorophenol + FADH2 + O2 = 2,6-dichlorobenzoquinone + FAD + chloride + H2O + H(+). The catalysed reaction is 2,6-dichlorobenzoquinone + H2O = 2-chloro-6-hydroxy-1,4-benzoquinone + chloride + 2 H(+). It functions in the pathway aromatic compound metabolism. It participates in xenobiotic degradation. Functionally, involved in the degradation of 2,4,6-trichlorophenol (2,4,6-TCP). Catalyzes the conversion of 2,4,6-TCP to 6-chlorohydroxyquinol (6-CHQ). The monooxygenase oxidizes 2,4,6-TCP to 2,6-dichloroquinone (2,6-DCBQ), which remains with the enzyme and is hydrolyzed to 2-chlorohydroxyquinone. 2-chlorohydroxyquinone is chemically reduced by ascorbate and NADH to 6-chlorohydroxyquinol (6-CHQ). The sequence is that of 2,4,6-trichlorophenol monooxygenase from Cupriavidus pinatubonensis (strain JMP 134 / LMG 1197) (Cupriavidus necator (strain JMP 134)).